Here is a 364-residue protein sequence, read N- to C-terminus: Spermidine/putrescine import ATP-binding protein PotA (364 aa).

Positions 6–236 (IEIRQIYKSY…PANLHVAMFI (231 aa)) constitute an ABC transporter domain. 38–45 (GPSGCGKT) contacts ATP.

Belongs to the ABC transporter superfamily. Spermidine/putrescine importer (TC 3.A.1.11.1) family. In terms of assembly, the complex is composed of two ATP-binding proteins (PotA), two transmembrane proteins (PotB and PotC) and a solute-binding protein (PotD).

The protein localises to the cell inner membrane. It carries out the reaction ATP + H2O + polyamine-[polyamine-binding protein]Side 1 = ADP + phosphate + polyamineSide 2 + [polyamine-binding protein]Side 1.. Part of the ABC transporter complex PotABCD involved in spermidine/putrescine import. Responsible for energy coupling to the transport system. The protein is Spermidine/putrescine import ATP-binding protein PotA of Legionella pneumophila (strain Paris).